A 486-amino-acid chain; its full sequence is Transcription factor bHLH49 (486 aa).

Basic and acidic residues predominate over residues 1 to 17 (MDLSAKDEFSAEKRNPD). Disordered stretches follow at residues 1-30 (MDLS…GDWR) and 194-300 (KEST…KDGY). Composition is skewed to polar residues over residues 198-221 (VRSS…TQSS) and 243-254 (QKNSEAAQSHRS). A compositionally biased stretch (low complexity) spans 273–293 (QSPNSPGKKSNSGKQQGKQSS). The bHLH domain maps to 309–359 (QATNSHSLAERVRREKISERMKFLQDLVPGCNKVTGKAVMLDEIINYVQSL).

Homodimer. Interacts with IBH1. Expressed constitutively in roots, stems, and flowers.

It is found in the nucleus. Functionally, transcriptional activator involved in cell elongation. Regulates the expression of a subset of genes involved in cell expansion by binding to the G-box motif. The sequence is that of Transcription factor bHLH49 (BHLH49) from Arabidopsis thaliana (Mouse-ear cress).